A 631-amino-acid polypeptide reads, in one-letter code: Golgin subfamily A member 8R (631 aa).

The tract at residues 1 to 72 (MAEETQHNKL…REGPTSSATL (72 aa)) is disordered. A compositionally biased stretch (polar residues) spans 38-50 (TNGSIPETATSGG). Coiled-coil stretches lie at residues 85–149 (VLDS…NTDL), 209–247 (ELEQ…HIEG), and 303–419 (SEVE…LSLM). 3 disordered regions span residues 422-451 (PGEG…DPES), 502-523 (AKDA…DEGE), and 551-610 (NSAD…QEHP). Residues 507–519 (LGGGHHQAGAQGG) are compositionally biased toward gly residues. The segment covering 568 to 577 (AADKHGDLRE) has biased composition (basic and acidic residues).

It belongs to the GOLGA8 family.

The protein is Golgin subfamily A member 8R of Homo sapiens (Human).